A 247-amino-acid chain; its full sequence is Complement C1q subcomponent subunit A (247 aa).

The N-terminal stretch at 1-24 (MEAPRGWLVIMISVLAVSLASSAA) is a signal peptide. The disordered stretch occupies residues 26–116 (DTCRDLDGRD…NPGNIKDQRR (91 aa)). Residues 27–38 (TCRDLDGRDGAA) show a composition bias toward basic and acidic residues. One can recognise a Collagen-like domain in the interval 33–111 (GRDGAARKPG…KGIKGNPGNI (79 aa)). 4-hydroxyproline occurs at positions 41 and 47. A 5-hydroxylysine modification is found at K50. The O-linked (Gal...) hydroxylysine glycan is linked to K50. A 4-hydroxyproline mark is found at P56 and P59. 5-hydroxylysine is present on K69. K69 is a glycosylation site (O-linked (Gal...) hydroxylysine). 4-hydroxyproline is present on residues P81 and P87. Residues 98 to 109 (LPGLKGIKGNPG) show a composition bias toward low complexity. The residue at position 102 (K102) is a 5-hydroxylysine. O-linked (Gal...) hydroxylysine glycosylation occurs at K102. One can recognise a C1q domain in the interval 112 to 247 (KDQRRPAFSA…FSGFLIFPST (136 aa)). The cysteines at positions 174 and 192 are disulfide-linked. Q201 is a Ca(2+) binding site.

As to quaternary structure, core component of the complement C1 complex, a calcium-dependent complex composed of 1 molecule of the C1Q subcomplex, 2 molecules of C1R and 2 molecules of C1S. The C1Q subcomplex is composed 18 subunits: 3 chains of C1QA, C1QB, and C1QC trimerize to form 6 collagen-like triple helices connected to six globular ligand-recognition modules (C1q domain). Interacts with CR1 (via Sushi 24 and Sushi 25 domains). Interacts (via C-terminus) with CD33; this interaction activates CD33 inhibitory motifs. In terms of processing, O-linked glycans are assumed to be the Glc-Gal disaccharides typically found as secondary modifications of hydroxylated lysines in collagen-like domains.

The protein resides in the secreted. The protein localises to the cell surface. With respect to regulation, the C1Q subcomplex is inhibited by sulfated molecules, such as triterpenoid sulfates, heparan sulfate, or chondroitin sulfates. In terms of biological role, core component of the complement C1 complex, a multiprotein complex that initiates the classical pathway of the complement system, a cascade of proteins that leads to phagocytosis and breakdown of pathogens and signaling that strengthens the adaptive immune system. The classical complement pathway is initiated by the C1Q subcomplex of the C1 complex, which specifically binds IgG or IgM immunoglobulins complexed with antigens, forming antigen-antibody complexes on the surface of pathogens: C1QA, together with C1QB and C1QC, specifically recognizes and binds the Fc regions of IgG or IgM via its C1q domain. Immunoglobulin-binding activates the proenzyme C1R, which cleaves C1S, initiating the proteolytic cascade of the complement system. The C1Q subcomplex is activated by a hexamer of IgG complexed with antigens, while it is activated by a pentameric IgM. The C1Q subcomplex also recognizes and binds phosphatidylserine exposed on the surface of cells undergoing programmed cell death, possibly promoting activation of the complement system. This Sus scrofa (Pig) protein is Complement C1q subcomponent subunit A (C1QA).